The primary structure comprises 258 residues: Ditrans,polycis-undecaprenyl-diphosphate synthase ((2E,6E)-farnesyl-diphosphate specific) (258 aa).

The active site involves D24. D24 lines the Mg(2+) pocket. Residues 25–28, W29, R37, H41, and 69–71 each bind substrate; these read GNGR and SSE. N72 acts as the Proton acceptor in catalysis. Residues W73, R75, R192, and 198–200 each bind substrate; that span reads RIS. E211 is a binding site for Mg(2+).

It belongs to the UPP synthase family. As to quaternary structure, homodimer. It depends on Mg(2+) as a cofactor.

The catalysed reaction is 8 isopentenyl diphosphate + (2E,6E)-farnesyl diphosphate = di-trans,octa-cis-undecaprenyl diphosphate + 8 diphosphate. Its function is as follows. Catalyzes the sequential condensation of isopentenyl diphosphate (IPP) with (2E,6E)-farnesyl diphosphate (E,E-FPP) to yield (2Z,6Z,10Z,14Z,18Z,22Z,26Z,30Z,34E,38E)-undecaprenyl diphosphate (di-trans,octa-cis-UPP). UPP is the precursor of glycosyl carrier lipid in the biosynthesis of bacterial cell wall polysaccharide components such as peptidoglycan and lipopolysaccharide. This Xanthomonas campestris pv. campestris (strain ATCC 33913 / DSM 3586 / NCPPB 528 / LMG 568 / P 25) protein is Ditrans,polycis-undecaprenyl-diphosphate synthase ((2E,6E)-farnesyl-diphosphate specific).